The sequence spans 312 residues: Olfactory receptor 10K2 (312 aa).

Topologically, residues 1–25 (MERVNETVVREVIFLGFSSLARLQQ) are extracellular. The N-linked (GlcNAc...) asparagine glycan is linked to Asn-5. Residues 26–46 (LLFVIFLLLYLFTLGTNAIII) form a helical membrane-spanning segment. At 47–54 (STIVLDRA) the chain is on the cytoplasmic side. A helical membrane pass occupies residues 55–75 (LHIPMYFFLAILSCSEICYTF). Over 76-99 (IIVPKMLVDLLSQKKTISFLGCAI) the chain is Extracellular. A helical membrane pass occupies residues 100-120 (QMFSFLFLGCSHSFLLAVMGY). Over 121-139 (DRYIAICNPLRYSVLMGHG) the chain is Cytoplasmic. A helical transmembrane segment spans residues 140-160 (VCMGLVAAACACGFTVAQIIT). The Extracellular portion of the chain corresponds to 161 to 197 (SLVFHLPFYSSNQLHHFFCDIAPVLKLASHHNHFSQI). A helical transmembrane segment spans residues 198–217 (VIFMLCTLVLAIPLLLILVS). The Cytoplasmic portion of the chain corresponds to 218-237 (YVHILSAILQFPSTLGRCKA). The helical transmembrane segment at 238–258 (FSTCVSHLIIVTVHYGCASFI) threads the bilayer. Residues 259–271 (YLRPQSNYSSSQD) are Extracellular-facing. Asn-265 carries an N-linked (GlcNAc...) asparagine glycan. The chain crosses the membrane as a helical span at residues 272–292 (ALISVSYTIITPLFNPMIYSL). The Cytoplasmic segment spans residues 293-312 (RNKEFKSALCKIVRRTISLL).

It belongs to the G-protein coupled receptor 1 family.

Its subcellular location is the cell membrane. Functionally, odorant receptor. The protein is Olfactory receptor 10K2 (OR10K2) of Homo sapiens (Human).